The primary structure comprises 136 residues: General odorant-binding protein 57e (136 aa).

Residues 1–20 (MLDQLTLCLLLNFLCANVLA) form the signal peptide. 3 disulfide bridges follow: C28-C61, C57-C109, and C98-C118.

The protein belongs to the PBP/GOBP family.

Present in the aqueous fluid surrounding olfactory sensory dendrites and are thought to aid in the capture and transport of hydrophobic odorants into and through this fluid. In Drosophila melanogaster (Fruit fly), this protein is General odorant-binding protein 57e.